We begin with the raw amino-acid sequence, 488 residues long: 3-octaprenyl-4-hydroxybenzoate carboxy-lyase (488 aa).

Asn172 contributes to the Mn(2+) binding site. Residues 175–177 (IYR), 189–191 (RWL), and 194–195 (RG) contribute to the prenylated FMN site. Glu238 lines the Mn(2+) pocket. Asp287 (proton donor) is an active-site residue.

Belongs to the UbiD family. Homohexamer. Prenylated FMN serves as cofactor. The cofactor is Mn(2+).

The protein resides in the cell membrane. The catalysed reaction is a 4-hydroxy-3-(all-trans-polyprenyl)benzoate + H(+) = a 2-(all-trans-polyprenyl)phenol + CO2. The protein operates within cofactor biosynthesis; ubiquinone biosynthesis. In terms of biological role, catalyzes the decarboxylation of 3-octaprenyl-4-hydroxy benzoate to 2-octaprenylphenol, an intermediate step in ubiquinone biosynthesis. This Halorhodospira halophila (strain DSM 244 / SL1) (Ectothiorhodospira halophila (strain DSM 244 / SL1)) protein is 3-octaprenyl-4-hydroxybenzoate carboxy-lyase.